The primary structure comprises 513 residues: Aromatic amino acid aminotransferase 2 (513 aa).

Phosphoserine is present on residues S90 and S92. Pyridoxal 5'-phosphate contacts are provided by residues Y102, 143 to 144 (SN), N232, Y263, and 314 to 316 (TFS). N232 is a substrate binding site. K317 carries the post-translational modification N6-(pyridoxal phosphate)lysine. R324 lines the pyridoxal 5'-phosphate pocket. R481 contributes to the substrate binding site.

This sequence belongs to the class-I pyridoxal-phosphate-dependent aminotransferase family. Requires pyridoxal 5'-phosphate as cofactor.

It localises to the cytoplasm. The enzyme catalyses an aromatic L-alpha-amino acid + 2-oxoglutarate = an aromatic oxo-acid + L-glutamate. It catalyses the reaction an aromatic L-alpha-amino acid + 4-methylsulfanyl-2-oxobutanoate = an aromatic oxo-acid + L-methionine. The catalysed reaction is L-kynurenine + 2-oxoglutarate = kynurenate + L-glutamate + H2O. It functions in the pathway amino-acid biosynthesis; L-methionine biosynthesis via salvage pathway; L-methionine from S-methyl-5-thio-alpha-D-ribose 1-phosphate: step 6/6. Its pathway is amino-acid degradation; L-kynurenine degradation; kynurenate from L-kynurenine: step 1/2. In terms of biological role, general aromatic amino acid transaminase involved in several otherwise unrelated metabolic pathways. Mainly involved in tryptophan degradation. Active with phenylalanine, tyrosine and tryptophan as amino donors and with phenylpyruvate, hydroxyphenylpyruvate and pyruvate as amino acceptors. Does not accept glutamate or 2-oxoglutarate as substrates. Also active with methionine, leucine, glutamine and kynurenine. Catalyzes the formation of methionine from 2-keto-4-methylthiobutyrate (KMTB) in the methionine salvage pathway primarily using aromatic amino acids (tyrosine, phenylalanine and tryptophan) as the amino donors. Catalyzes the irreversible transamination of the L-tryptophan metabolite L-kynurenine to form kynurenic acid (KA) with pyruvate as amino acceptor. The chain is Aromatic amino acid aminotransferase 2 from Saccharomyces cerevisiae (strain ATCC 204508 / S288c) (Baker's yeast).